The following is a 245-amino-acid chain: tRNA (guanine-N(7)-)-methyltransferase (245 aa).

Glutamate 75, glutamate 100, aspartate 127, and aspartate 150 together coordinate S-adenosyl-L-methionine. Residue aspartate 150 is part of the active site. Substrate contacts are provided by residues lysine 154, aspartate 186, and 223–226 (TKFE).

Belongs to the class I-like SAM-binding methyltransferase superfamily. TrmB family.

It carries out the reaction guanosine(46) in tRNA + S-adenosyl-L-methionine = N(7)-methylguanosine(46) in tRNA + S-adenosyl-L-homocysteine. It participates in tRNA modification; N(7)-methylguanine-tRNA biosynthesis. In terms of biological role, catalyzes the formation of N(7)-methylguanine at position 46 (m7G46) in tRNA. This is tRNA (guanine-N(7)-)-methyltransferase from Photobacterium profundum (strain SS9).